Reading from the N-terminus, the 53-residue chain is ATP synthase protein 8 (53 aa).

Residues 9 to 29 (WIFFLFFFICIFLIFNIMNYF) form a helical membrane-spanning segment.

The protein belongs to the ATPase protein 8 family. F-type ATPases have 2 components, CF(1) - the catalytic core - and CF(0) - the membrane proton channel.

The protein resides in the mitochondrion membrane. Functionally, mitochondrial membrane ATP synthase (F(1)F(0) ATP synthase or Complex V) produces ATP from ADP in the presence of a proton gradient across the membrane which is generated by electron transport complexes of the respiratory chain. F-type ATPases consist of two structural domains, F(1) - containing the extramembraneous catalytic core and F(0) - containing the membrane proton channel, linked together by a central stalk and a peripheral stalk. During catalysis, ATP synthesis in the catalytic domain of F(1) is coupled via a rotary mechanism of the central stalk subunits to proton translocation. Part of the complex F(0) domain. Minor subunit located with subunit a in the membrane. The protein is ATP synthase protein 8 (mt:ATPase8) of Bombyx mori (Silk moth).